The sequence spans 363 residues: MLTTPNPDLCVEPFIEPSQWFFTLVEMILAVGGLIMNTNITVICHKASPMPHPQRRLLASISINFAILSGFQLARNFFLFLVMQQPCLNQVTTVSCKLQQFPLIFCYIHCAASFFLLGVQSNFLKLKPIDKSPMKWYLSCSVWQSTIAAVCVALSLLFTAFDQDLENEPMNKCSILLAVSQSYLTFSLLTLLILLHATGLIFIMLASVLQRDKKSWISFTIFSLKEIFKYETLAWQISLFISGCVVLYRHVLRESCDECAVIVLELAFLIVPLLISFMHPLYLIWYVLPMRDAATRTFPCMLSALPEYSLVPPQVPSASTSATFAIQSPRADLTPNDTLHMESKKKPLSQSPRVVIEEEDVAE.

7 helical membrane-spanning segments follow: residues 20–40 (WFFT…NTNI), 63–83 (INFA…FLVM), 101–121 (FPLI…GVQS), 141–161 (SVWQ…FTAF), 186–206 (FSLL…IMLA), 227–247 (IFKY…CVVL), and 268–288 (FLIV…WYVL). A disordered region spans residues 329-363 (PRADLTPNDTLHMESKKKPLSQSPRVVIEEEDVAE).

It localises to the membrane. This is an uncharacterized protein from Caenorhabditis elegans.